Reading from the N-terminus, the 120-residue chain is Large ribosomal subunit protein uL18c (120 aa).

It belongs to the universal ribosomal protein uL18 family. In terms of assembly, part of the 50S ribosomal subunit; contacts the 5S rRNA.

The protein localises to the plastid. The protein resides in the chloroplast. Binds 5S rRNA, forms part of the central protuberance of the 50S subunit. The protein is Large ribosomal subunit protein uL18c (rpl18) of Pyropia yezoensis (Susabi-nori).